Consider the following 654-residue polypeptide: MTQITEKELKKKYLDLLSQNFDTPEKLATEIINLESILELPKGTEHFVSDLHGEYEAFQHVLRNGSGNVRAKINDIFKERLSTKELNDLTALVYYPEDKLKLIKSDFQSCGQLNVWYITTIEHLIELIKYCSSKYTRSKLRKALPKQYVYIIEELLYKSNEYQNKKSYYETLVNQVIELKQADDLIIGLAYSVQRLVVDHLHVVGDIYDRGPQPDKIMDTLINYHSLDIQWGNHDVLWVGAYAGSKVCLANLLRICARYDNLDIIEDAYGINLRPLLTLAEKYYDADNPAFKPKKRPDKHERLTQREESQITKIHQAIAMIQFKLEIPIIKRRPNFEMEERLVLEKVNYDTNEITVYGNTYPLKDTCFQTINRNNPAELLPEEEEVMNKLLLSFQQSEKLRRHMSFLMRKGSLYLPYNGNLLIHGCIPVDENGEMESFEIDGHTYSGQELLDVFEYHVRKSFDEKENTDDLSTDLVWYLWTGKYSSLFGKRAMTTFERYFIADKASHKEEKNPYYHLREDVNMVRKMLSDFGLNPDEGRIINGHTPVKEINGEDPIKADGKMLVIDGGFSKAYQSTTGIAGYTLLYNSFGMQLVAHQQFNAKEKILSEGIDELSIKRVVDKELQRKKIRDTNIGKELQAQIDILKMLMHDRYLD.

Residues 288–307 form a disordered region; it reads NPAFKPKKRPDKHERLTQRE. Residues 298-307 are compositionally biased toward basic and acidic residues; that stretch reads DKHERLTQRE.

It belongs to the FBPase class 3 family. It depends on Mn(2+) as a cofactor.

It carries out the reaction beta-D-fructose 1,6-bisphosphate + H2O = beta-D-fructose 6-phosphate + phosphate. It functions in the pathway carbohydrate biosynthesis; gluconeogenesis. The chain is Fructose-1,6-bisphosphatase class 3 from Staphylococcus aureus (strain Mu3 / ATCC 700698).